A 231-amino-acid chain; its full sequence is MQQISLYAKISNSQLKICLHALASLTGMDPITILQHTMVWAPAQKYTPKILPGQGGQLDQYRIHVTNDNKNEDKEKIISYVQSKDSKEDIHNLANRQWHFQIMEMPEAGKQKTTSQSISSWSVKKGDSFQFLQSLAYKFQYEYWQKGFQFVYGNAVIQLTRIHILDQTTKNIKLLDPSKQWLVKVYIDVGHLTDIEALNKAVKELEKVKTELHGLMNLEIPDRNAFDTRIR.

Positions 191–218 (HLTDIEALNKAVKELEKVKTELHGLMNL) form a coiled coil.

This sequence belongs to the Mediator complex subunit 18 family. As to quaternary structure, component of the Mediator complex.

It is found in the nucleus. Functionally, component of the Mediator complex, a coactivator involved in the regulated transcription of nearly all RNA polymerase II-dependent genes. Mediator functions as a bridge to convey information from gene-specific regulatory proteins to the basal RNA polymerase II transcription machinery. Mediator is recruited to promoters by direct interactions with regulatory proteins and serves as a scaffold for the assembly of a functional preinitiation complex with RNA polymerase II and the general transcription factors. The chain is Mediator of RNA polymerase II transcription subunit 18 (SRB5) from Yarrowia lipolytica (strain CLIB 122 / E 150) (Yeast).